Consider the following 217-residue polypeptide: Uracil-DNA glycosylase (217 aa).

Aspartate 62 serves as the catalytic Proton acceptor.

Belongs to the uracil-DNA glycosylase (UDG) superfamily. UNG family.

It is found in the cytoplasm. The enzyme catalyses Hydrolyzes single-stranded DNA or mismatched double-stranded DNA and polynucleotides, releasing free uracil.. Its function is as follows. Excises uracil residues from the DNA which can arise as a result of misincorporation of dUMP residues by DNA polymerase or due to deamination of cytosine. The polypeptide is Uracil-DNA glycosylase (Streptococcus pyogenes serotype M28 (strain MGAS6180)).